The following is a 97-amino-acid chain: DNA/RNA-binding protein Alba (97 aa).

Lysine 15 bears the N6-acetyllysine mark.

Belongs to the histone-like Alba family. Post-translationally, acetylated. Acetylation at Lys-15 decreases DNA-binding affinity.

The protein resides in the cytoplasm. It localises to the chromosome. Binds double-stranded DNA tightly but without sequence specificity. Involved in DNA compaction. This chain is DNA/RNA-binding protein Alba, found in Ignicoccus hospitalis (strain KIN4/I / DSM 18386 / JCM 14125).